The following is a 247-amino-acid chain: MQPKPLAPPPGQHPLVQALAASIRSAWAGLPGLEILPCDEDLRFIQGQLDGEGLSIGNELFRCIGLRKLHLEVARLGNGLQILHSVWFPDPHYDLPIFGADIVAGPAGISAAIVDLSPTSDALPEQLIQRLEARPWPAFRQVRELPAWGSAIFSNKVCFIRPDGADEEAAFQQLVSHYLQVMATSVIEATPEQSTALTTVRRYEGQLNYCLQQKRNDKTRRVLEKAFDSAWADRYIDMLLFDNPPEL.

This sequence belongs to the HY2 family.

The catalysed reaction is (2R,3Z)-phycocyanobilin + 4 oxidized [2Fe-2S]-[ferredoxin] = biliverdin IXalpha + 4 reduced [2Fe-2S]-[ferredoxin] + 4 H(+). Its function is as follows. Catalyzes the four-electron reduction of biliverdin IX-alpha (2-electron reduction at both the A and D rings); the reaction proceeds via an isolatable 2-electron intermediate, 181,182-dihydrobiliverdin. The chain is Phycocyanobilin:ferredoxin oxidoreductase from Synechococcus sp. (strain CC9605).